Reading from the N-terminus, the 1252-residue chain is DNA-directed RNA polymerase subunit beta (1252 aa).

This sequence belongs to the RNA polymerase beta chain family. The RNAP catalytic core consists of 2 alpha, 1 beta, 1 beta' and 1 omega subunit. When a sigma factor is associated with the core the holoenzyme is formed, which can initiate transcription.

It carries out the reaction RNA(n) + a ribonucleoside 5'-triphosphate = RNA(n+1) + diphosphate. Its function is as follows. DNA-dependent RNA polymerase catalyzes the transcription of DNA into RNA using the four ribonucleoside triphosphates as substrates. In Chlamydia muridarum (strain MoPn / Nigg), this protein is DNA-directed RNA polymerase subunit beta.